Here is a 128-residue protein sequence, read N- to C-terminus: Probable 4-amino-4-deoxy-L-arabinose-phosphoundecaprenol flippase subunit ArnF (128 aa).

Residues 1 to 2 (MG) are Cytoplasmic-facing. Residues 3 to 23 (LMWGLFSVIIASAAQLSLGFA) traverse the membrane as a helical segment. Residues 24–35 (ASHLPPMTHLWD) lie on the Periplasmic side of the membrane. The helical transmembrane segment at 36–56 (FIAALLAFGLDARILLLGLLG) threads the bilayer. The Cytoplasmic segment spans residues 57–76 (YLLSVFCWYKTLHKLALSKA). The helical transmembrane segment at 77-97 (YALLSMSYVLVWIASMVLPGW) threads the bilayer. At 98–100 (EGT) the chain is on the periplasmic side. A helical membrane pass occupies residues 101–121 (FSLKALLGVACIMSGLMLIFL). Residues 122–128 (PTTKQRY) lie on the Cytoplasmic side of the membrane.

Belongs to the ArnF family. Heterodimer of ArnE and ArnF.

It is found in the cell inner membrane. It functions in the pathway bacterial outer membrane biogenesis; lipopolysaccharide biosynthesis. Functionally, translocates 4-amino-4-deoxy-L-arabinose-phosphoundecaprenol (alpha-L-Ara4N-phosphoundecaprenol) from the cytoplasmic to the periplasmic side of the inner membrane. The polypeptide is Probable 4-amino-4-deoxy-L-arabinose-phosphoundecaprenol flippase subunit ArnF (Escherichia coli O127:H6 (strain E2348/69 / EPEC)).